A 1502-amino-acid chain; its full sequence is Leucine-rich repeat-containing protein 9 (1502 aa).

29 LRR repeats span residues 53–79, 97–119, 120–141, 142–164, 166–188, 224–247, 296–320, 699–721, 722–744, 746–764, 765–790, 792–814, 822–849, 894–916, 917–938, 939–960, 961–983, 985–1009, 1011–1030, 1031–1053, 1100–1123, 1124–1146, 1147–1170, 1209–1232, 1234–1255, 1256–1278, 1280–1301, 1302–1325, and 1327–1351; these read FPNLTQLILVGQNIHCIAGLESCHFLK, CADLQKLYLYHNEISVIEGLENL, LKLEVLWLNNNQINVIEGLDMM, QNLKELNLANNLIHSIGESLDPN, QLERLNLSGNKISSFKELTNLAR, LQRLDTYDVSEKQIKNLAESTVVK, EHELTDMKSSGNMQANIPISNKFHE, YSQITVLNLHGNSLSKLKDISRL, NGLRKLIISFNEFSSLEDVSYLT, LEYLDASHNQVITLEGFKG, LGKLKYLDLSWNKLTNSREDLHILRK, AIQLSSLDIRYNFWQKPASVLKD, LTHLNGVTITEDEISEALQISSGSRITQ, YTKITSLTLDSQNLVRITNLEKL, VNLRWASFSSNHLTKIEGLEHC, VNLEELNLDDNSISKLEGLSKL, TKLRRLSINNNLLAGFDRHVIES, SHLHFLSAENNNISSLAGLQRGYKL, ELYLSNNCISSNQEIYSLKG, LNNLVILDMWGNPILLKHENYRL, FTELQDLNWRTSSIRSIDLVPADH, FRNVQTVNLENNNLTSFSGLIFL, PNIKNLYLNHNRIESILPQQKSQS, MQSLEVLHLGYNGINSLPMLQLGR, RNLKSLYLQGNEISHVEGLENL, QFLRELVLDHNRIKAIAETSFAK, NSLVSLNLEENRLRDLNNLPPL, LKLRKLLIGSNKIQEISEIEKLEV, and PALVELSISGNPISRKPFLRNLLVV. The tract at residues 317-342 is disordered; it reads KFHENNCDTEESNSQQSSERRKNNSD. Polar residues predominate over residues 1479–1496; it reads TQQSGQARSQQKHPFNQE. Residues 1479–1502 are disordered; that stretch reads TQQSGQARSQQKHPFNQENEGRCV.

The sequence is that of Leucine-rich repeat-containing protein 9 (lrrc9) from Xenopus tropicalis (Western clawed frog).